A 746-amino-acid chain; its full sequence is Exostosin-1 (746 aa).

At 1–7 (MQAKKRY) the chain is on the cytoplasmic side. The helical; Signal-anchor for type II membrane protein transmembrane segment at 8–28 (FILLSAGSCLALLFYFGGLQF) threads the bilayer. At 29–746 (RASRSHSRRE…RKKYRDIERL (718 aa)) the chain is on the lumenal side. An N-linked (GlcNAc...) asparagine glycan is attached at N89. 2 cysteine pairs are disulfide-bonded: C98-C103 and C109-C152. A protein is bound by residues L166 and Y203. UDP-binding residues include K267, K269, Y271, and R280. The cysteines at positions 298 and 312 are disulfide-linked. Position 300 (H300) interacts with a protein. Residues Y319 and Y324 each contribute to the UDP site. N-linked (GlcNAc...) asparagine glycosylation is present at N330. Intrachain disulfides connect C334–C355 and C652–C704. R346 and E349 together coordinate UDP.

Belongs to the glycosyltransferase 47 family. In terms of assembly, part of the heparan sulfate polymerase, a dimeric complex composed of EXT1 and EXT2. Could also form homooligomeric complexes. Interacts with NDST1. Post-translationally, N-glycosylated.

It localises to the golgi apparatus membrane. It is found in the golgi apparatus. The protein localises to the cis-Golgi network membrane. The protein resides in the endoplasmic reticulum membrane. It carries out the reaction 3-O-{alpha-D-GlcNAc-[(1-&gt;4)-beta-D-GlcA-(1-&gt;4)-alpha-D-GlcNAc](n)-(1-&gt;4)-beta-D-GlcA-(1-&gt;3)-beta-D-Gal-(1-&gt;3)-beta-D-Gal-(1-&gt;4)-beta-D-Xyl}-L-seryl-[protein] + UDP-alpha-D-glucuronate = 3-O-{[(1-&gt;4)-beta-D-GlcA-(1-&gt;4)-alpha-D-GlcNAc](n+1)-(1-&gt;4)-beta-D-GlcA-(1-&gt;3)-beta-D-Gal-(1-&gt;3)-beta-D-Gal-(1-&gt;4)-beta-D-Xyl}-L-seryl-[protein] + UDP + H(+). The protein operates within protein modification; protein glycosylation. Functionally, glycosyltransferase forming with EXT2 the heterodimeric heparan sulfate polymerase which catalyzes the elongation of the heparan sulfate glycan backbone. Glycan backbone extension consists in the alternating transfer of (1-&gt;4)-beta-D-GlcA and (1-&gt;4)-alpha-D-GlcNAc residues from their respective UDP-sugar donors. Both EXT1 and EXT2 are required for the full activity of the polymerase since EXT1 bears the N-acetylglucosaminyl-proteoglycan 4-beta-glucuronosyltransferase activity within the complex while EXT2 carries the glucuronosyl-N-acetylglucosaminyl-proteoglycan 4-alpha-N-acetylglucosaminyltransferase activity. Heparan sulfate proteoglycans are ubiquitous components of the extracellular matrix and play an important role in tissue homeostasis and signaling. In Papio anubis (Olive baboon), this protein is Exostosin-1 (EXT1).